We begin with the raw amino-acid sequence, 233 residues long: Ribose-5-phosphate isomerase A (233 aa).

Residues 28–31, 83–86, and 96–99 each bind substrate; these read SGST, DGAD, and KGGG. Glu105 acts as the Proton acceptor in catalysis. Lys123 provides a ligand contact to substrate.

The protein belongs to the ribose 5-phosphate isomerase family. As to quaternary structure, homodimer.

The catalysed reaction is aldehydo-D-ribose 5-phosphate = D-ribulose 5-phosphate. The protein operates within carbohydrate degradation; pentose phosphate pathway; D-ribose 5-phosphate from D-ribulose 5-phosphate (non-oxidative stage): step 1/1. Its function is as follows. Catalyzes the reversible conversion of ribose-5-phosphate to ribulose 5-phosphate. The sequence is that of Ribose-5-phosphate isomerase A from Maricaulis maris (strain MCS10) (Caulobacter maris).